The primary structure comprises 634 residues: DNA-directed RNA polymerase subunit gamma (634 aa).

Zn(2+) contacts are provided by C74, C76, C89, and C92. Positions 471, 473, and 475 each coordinate Mg(2+).

Belongs to the RNA polymerase beta' chain family. RpoC1 subfamily. As to quaternary structure, in cyanobacteria the RNAP catalytic core is composed of 2 alpha, 1 beta, 1 beta', 1 gamma and 1 omega subunit. When a sigma factor is associated with the core the holoenzyme is formed, which can initiate transcription. Mg(2+) is required as a cofactor. Requires Zn(2+) as cofactor.

The catalysed reaction is RNA(n) + a ribonucleoside 5'-triphosphate = RNA(n+1) + diphosphate. Its function is as follows. DNA-dependent RNA polymerase catalyzes the transcription of DNA into RNA using the four ribonucleoside triphosphates as substrates. The polypeptide is DNA-directed RNA polymerase subunit gamma (Synechococcus sp. (strain CC9902)).